Here is a 454-residue protein sequence, read N- to C-terminus: Pup--protein ligase (454 aa).

Residue glutamate 9 coordinates Mg(2+). Arginine 53 is an ATP binding site. Tyrosine 55 lines the Mg(2+) pocket. Aspartate 57 serves as the catalytic Proton acceptor. Glutamate 63 is a Mg(2+) binding site. The ATP site is built by threonine 66 and tryptophan 421.

Belongs to the Pup ligase/Pup deamidase family. Pup-conjugating enzyme subfamily.

It carries out the reaction ATP + [prokaryotic ubiquitin-like protein]-L-glutamate + [protein]-L-lysine = ADP + phosphate + N(6)-([prokaryotic ubiquitin-like protein]-gamma-L-glutamyl)-[protein]-L-lysine.. It functions in the pathway protein degradation; proteasomal Pup-dependent pathway. The protein operates within protein modification; protein pupylation. In terms of biological role, catalyzes the covalent attachment of the prokaryotic ubiquitin-like protein modifier Pup to the proteasomal substrate proteins, thereby targeting them for proteasomal degradation. This tagging system is termed pupylation. The ligation reaction involves the side-chain carboxylate of the C-terminal glutamate of Pup and the side-chain amino group of a substrate lysine. The sequence is that of Pup--protein ligase from Frankia casuarinae (strain DSM 45818 / CECT 9043 / HFP020203 / CcI3).